The chain runs to 391 residues: Transaldolase (391 aa).

Positions 1–329 (MGKNLLEQLR…RLKVLDGQEH (329 aa)) are transaldolase. Residue lysine 136 is the Schiff-base intermediate with substrate of the active site. EF-hand domains lie at 329-364 (HIKH…FDAL) and 365-387 (DRDH…AFRL). Residues aspartate 342, aspartate 344, aspartate 346, glutamate 353, aspartate 365, aspartate 367, aspartate 369, lysine 371, and glutamate 376 each contribute to the Ca(2+) site.

Belongs to the transaldolase family. Type 1 subfamily.

It localises to the cytoplasm. It catalyses the reaction D-sedoheptulose 7-phosphate + D-glyceraldehyde 3-phosphate = D-erythrose 4-phosphate + beta-D-fructose 6-phosphate. The protein operates within carbohydrate degradation; pentose phosphate pathway; D-glyceraldehyde 3-phosphate and beta-D-fructose 6-phosphate from D-ribose 5-phosphate and D-xylulose 5-phosphate (non-oxidative stage): step 2/3. Transaldolase is important for the balance of metabolites in the pentose-phosphate pathway. In Synechocystis sp. (strain ATCC 27184 / PCC 6803 / Kazusa), this protein is Transaldolase.